A 237-amino-acid chain; its full sequence is Sugar fermentation stimulation protein homolog (237 aa).

The protein belongs to the SfsA family.

This is Sugar fermentation stimulation protein homolog from Pseudomonas putida (strain ATCC 700007 / DSM 6899 / JCM 31910 / BCRC 17059 / LMG 24140 / F1).